Reading from the N-terminus, the 28-residue chain is Short cationic peptide-1c (28 aa).

Residue Glu-28 is modified to Glutamic acid 1-amide.

As to expression, expressed by the venom gland.

The protein resides in the secreted. The sequence is that of Short cationic peptide-1c from Cupiennius salei (American wandering spider).